The following is a 455-amino-acid chain: MAAAKDVNLFGTDGIRGHVGQHLTPQLALQVGFCAGLELGQDASPHQPFILGQDSRNSSDMLAMALSAGLTAAGLDVWHIGLCPTPTVAYLTHHTEAVGGVMVSASHNPPADNGIKFFQANGTKLPPTTQGKIEQRIRAYSQQQPSGTWGHHFHRPELTKSYTDAIQTPLHAQVDFQGLKVVLDLAWGAATQLAPAVFKAMGAEVICLHDQPDGDRINVNCGSTHLAPLKAAVNLHEADVGFAFDGDADRVLAIDCQGRTVDGDYILYLWGKALQQQNQLPKDLIVATVMSNLGFELAWQQQGGTLLRAAVGDQNVHAEMLNHGSMLGGEQSGHILCPHYGVSGDGLLTALHLATIICQNKTRLSCLVDDSFQTYPQLLKNVRVEDRDRRRNWQECQPLQTLIDQATDDMGDQGRILVRASGTEPLIRVMVEARDMRMVNHWTDQLVRAVETHLA.

The active-site Phosphoserine intermediate is serine 106. Serine 106, aspartate 245, aspartate 247, and aspartate 249 together coordinate Mg(2+). Serine 106 bears the Phosphoserine mark.

This sequence belongs to the phosphohexose mutase family. Mg(2+) serves as cofactor. In terms of processing, activated by phosphorylation.

It carries out the reaction alpha-D-glucosamine 1-phosphate = D-glucosamine 6-phosphate. Functionally, catalyzes the conversion of glucosamine-6-phosphate to glucosamine-1-phosphate. This is Phosphoglucosamine mutase from Acaryochloris marina (strain MBIC 11017).